The following is a 596-amino-acid chain: Chloride intracellular channel protein 6 (596 aa).

The interval 1–360 (MAEATEPKEV…ALEEGDPGQE (360 aa)) is disordered. Residues 34 to 48 (LEGREASEEAAEAPR) show a composition bias toward basic and acidic residues. Phosphoserine is present on serine 40. Positions 65–74 (GCGQDEGTGG) are enriched in gly residues. Residues 83–98 (GPEAETPGASGAPGEA) are compositionally biased toward low complexity. The span at 118-130 (SAQQVQGMSSGLD) shows a compositional bias: polar residues. Positions 148 to 160 (DPTASEAGEEAES) are enriched in acidic residues. Composition is skewed to low complexity over residues 197–213 (GSES…PQPQ) and 225–244 (GGNE…AGEG). The span at 246–290 (TLGKDGSEEAASEDARVDAHENGDQGKLQEETGEEEARPEPELKG) shows a compositional bias: basic and acidic residues. Serine 304 bears the Phosphoserine mark. Residues 338-348 (ELGRVNGRREN) show a composition bias toward basic and acidic residues. Residues 379-382 (CPFS) carry the G-site motif. Residues 381–401 (FSQRLFMILWLKGVIFNVTTV) traverse the membrane as a helical segment. The GST C-terminal domain maps to 425 to 596 (DGEVKTDVNK…AYSDAAKRMK (172 aa)).

It belongs to the chloride channel CLIC family. In terms of assembly, monomer (soluble state). Interacts with dopamine receptors DRD2, DRD3 and DRD4. In terms of processing, phosphorylated.

The protein localises to the cytoplasm. It is found in the cell membrane. The catalysed reaction is chloride(in) = chloride(out). With respect to regulation, channel activity is redox- and pH-regulated. Inhibited by IAA-94. Functionally, in the soluble state, catalyzes glutaredoxin-like thiol disulfide exchange reactions with reduced glutathione as electron donor. Can insert into membranes and form voltage-dependent chloride-selective channels. The channel opens upon membrane depolarization at positive voltages and closes at negative membrane voltages. May play a critical role in water-secreting cells, possibly through the regulation of chloride ion transport. This is Chloride intracellular channel protein 6 (Clic6) from Mus musculus (Mouse).